The primary structure comprises 82 residues: ATP synthase subunit 9, mitochondrial (82 aa).

2 helical membrane passes run 8-28 (IGAG…GNVF) and 45-67 (SFGY…PMMA).

It belongs to the ATPase C chain family. In terms of assembly, F-type ATPases have 2 components, CF(1) - the catalytic core - and CF(0) - the membrane proton channel. CF(1) has five subunits: alpha(3), beta(3), gamma(1), delta(1), epsilon(1). CF(0) has three main subunits: a, b and c.

Its subcellular location is the mitochondrion membrane. Functionally, this protein is one of the chains of the nonenzymatic membrane component (F0) of mitochondrial ATPase. In Malus domestica (Apple), this protein is ATP synthase subunit 9, mitochondrial (ATP9).